Here is a 363-residue protein sequence, read N- to C-terminus: NAD(P)H-quinone oxidoreductase subunit 1, chloroplastic (363 aa).

A run of 9 helical transmembrane segments spans residues 30–50, 98–118, 129–149, 165–185, 203–223, 248–268, 269–289, 300–320, and 334–354; these read LVPI…IVWL, FSIG…VIPF, IGVF…LMSG, AAQS…ISLL, LWGW…ISSL, YSGI…LVSS, LFVT…IFVP, VFGT…FLFI, and DQLL…NLLL.

This sequence belongs to the complex I subunit 1 family. As to quaternary structure, NDH is composed of at least 16 different subunits, 5 of which are encoded in the nucleus.

Its subcellular location is the plastid. The protein localises to the chloroplast thylakoid membrane. The enzyme catalyses a plastoquinone + NADH + (n+1) H(+)(in) = a plastoquinol + NAD(+) + n H(+)(out). It catalyses the reaction a plastoquinone + NADPH + (n+1) H(+)(in) = a plastoquinol + NADP(+) + n H(+)(out). NDH shuttles electrons from NAD(P)H:plastoquinone, via FMN and iron-sulfur (Fe-S) centers, to quinones in the photosynthetic chain and possibly in a chloroplast respiratory chain. The immediate electron acceptor for the enzyme in this species is believed to be plastoquinone. Couples the redox reaction to proton translocation, and thus conserves the redox energy in a proton gradient. This Oenothera elata subsp. hookeri (Hooker's evening primrose) protein is NAD(P)H-quinone oxidoreductase subunit 1, chloroplastic.